We begin with the raw amino-acid sequence, 374 residues long: MKPAIATISRQALRHNIQLIKKLAPKQKLLAMIKANAYGQGLLPAAATLADLVDGFGVARLHEALEVQETGYTGKILLVEGFFDREELLKTLSRGFDTVIHCLEQLELLEQVAKEWQIEQQKRFWQRKTKIYFPINIWLKIDTGMHRLGIHPEQVDLFYARLKSCPLVATISFMSHFSRADELDCGYTEQQIATFEMATEQYSAHSRSIAASSGILYWPQAHYEWVRPGIIMHGISPHYQPITQLGFKPVMTLSSTLIAIRSHKAGEPVGYGGAWISDKATTLGVVAMGYGDGYPRNAPEGTPVLINGRIVPIVGRVSMDMLTVDLGIDSQDQVGDEVILWGNDLLIETVAQHIGVISYELITKLTPRVIFEYR.

K34 functions as the Proton acceptor; specific for D-alanine in the catalytic mechanism. K34 is subject to N6-(pyridoxal phosphate)lysine. R147 lines the substrate pocket. Y271 serves as the catalytic Proton acceptor; specific for L-alanine. M319 serves as a coordination point for substrate.

The protein belongs to the alanine racemase family. The cofactor is pyridoxal 5'-phosphate.

The enzyme catalyses L-alanine = D-alanine. Its pathway is amino-acid biosynthesis; D-alanine biosynthesis; D-alanine from L-alanine: step 1/1. Catalyzes the interconversion of L-alanine and D-alanine. May also act on other amino acids. The sequence is that of Alanine racemase (alr) from Haemophilus ducreyi (strain 35000HP / ATCC 700724).